A 301-amino-acid chain; its full sequence is uncharacterized protein (301 aa).

Belongs to the asfivirus E301R family. Interacts with host IRF3.

In terms of biological role, plays a role in the inhibition of host innate immune system by acting as a negatively regulator of type I interferon production. Mechanistically, interacts with and prevents host IRF3 nuclear localization to inhibit its transcriptional activity. This is an uncharacterized protein from African swine fever virus (strain Badajoz 1971 Vero-adapted) (Ba71V).